Consider the following 162-residue polypeptide: Sec-independent protein translocase protein TatB (162 aa).

A helical transmembrane segment spans residues 1–21; sequence MFDLGWTELLVIGVVALIVVG. Disordered regions lie at residues 69-111 and 124-162; these read ATNP…DRAE and AADR…ETKA. Composition is skewed to basic and acidic residues over residues 83-111 and 124-141; these read ATRD…DRAE and AADR…KAEE. Residues 144-155 are compositionally biased toward low complexity; sequence AALSATPASTAS.

It belongs to the TatB family. The Tat system comprises two distinct complexes: a TatABC complex, containing multiple copies of TatA, TatB and TatC subunits, and a separate TatA complex, containing only TatA subunits. Substrates initially bind to the TatABC complex, which probably triggers association of the separate TatA complex to form the active translocon.

It is found in the cell inner membrane. Functionally, part of the twin-arginine translocation (Tat) system that transports large folded proteins containing a characteristic twin-arginine motif in their signal peptide across membranes. Together with TatC, TatB is part of a receptor directly interacting with Tat signal peptides. TatB may form an oligomeric binding site that transiently accommodates folded Tat precursor proteins before their translocation. The protein is Sec-independent protein translocase protein TatB of Ruegeria sp. (strain TM1040) (Silicibacter sp.).